The sequence spans 488 residues: UDP-glycosyltransferase 92A1 (488 aa).

UDP-alpha-D-glucose contacts are provided by residues Ser-292, 358-360 (APQ), 375-383 (HCGWNSILE), and 397-400 (AAEQ).

Belongs to the UDP-glycosyltransferase family.

The polypeptide is UDP-glycosyltransferase 92A1 (UGT92A1) (Arabidopsis thaliana (Mouse-ear cress)).